A 347-amino-acid chain; its full sequence is L-threonine 3-dehydrogenase (347 aa).

Cys42 is a Zn(2+) binding site. Active-site charge relay system residues include Thr44 and His47. The Zn(2+) site is built by His67, Glu68, Cys97, Cys100, Cys103, and Cys111. NAD(+)-binding positions include Ile180, Asp200, Arg205, 267–269 (LSL), and 292–293 (IT).

Belongs to the zinc-containing alcohol dehydrogenase family. In terms of assembly, homotetramer. It depends on Zn(2+) as a cofactor.

It localises to the cytoplasm. It carries out the reaction L-threonine + NAD(+) = (2S)-2-amino-3-oxobutanoate + NADH + H(+). Its pathway is amino-acid degradation; L-threonine degradation via oxydo-reductase pathway; glycine from L-threonine: step 1/2. Catalyzes the NAD(+)-dependent oxidation of L-threonine to 2-amino-3-ketobutyrate. This chain is L-threonine 3-dehydrogenase, found in Bacillus velezensis (strain DSM 23117 / BGSC 10A6 / LMG 26770 / FZB42) (Bacillus amyloliquefaciens subsp. plantarum).